We begin with the raw amino-acid sequence, 259 residues long: Deoxyribose-phosphate aldolase (259 aa).

Asp-102 (proton donor/acceptor) is an active-site residue. Lys-167 acts as the Schiff-base intermediate with acetaldehyde in catalysis. Lys-201 (proton donor/acceptor) is an active-site residue.

The protein belongs to the DeoC/FbaB aldolase family. DeoC type 2 subfamily.

The protein resides in the cytoplasm. It carries out the reaction 2-deoxy-D-ribose 5-phosphate = D-glyceraldehyde 3-phosphate + acetaldehyde. It functions in the pathway carbohydrate degradation; 2-deoxy-D-ribose 1-phosphate degradation; D-glyceraldehyde 3-phosphate and acetaldehyde from 2-deoxy-alpha-D-ribose 1-phosphate: step 2/2. Functionally, catalyzes a reversible aldol reaction between acetaldehyde and D-glyceraldehyde 3-phosphate to generate 2-deoxy-D-ribose 5-phosphate. The polypeptide is Deoxyribose-phosphate aldolase (Photorhabdus laumondii subsp. laumondii (strain DSM 15139 / CIP 105565 / TT01) (Photorhabdus luminescens subsp. laumondii)).